A 292-amino-acid polypeptide reads, in one-letter code: Elongation factor Ts (292 aa).

Residues 81–84 (TDFV) are involved in Mg(2+) ion dislocation from EF-Tu.

It belongs to the EF-Ts family.

Its subcellular location is the cytoplasm. In terms of biological role, associates with the EF-Tu.GDP complex and induces the exchange of GDP to GTP. It remains bound to the aminoacyl-tRNA.EF-Tu.GTP complex up to the GTP hydrolysis stage on the ribosome. The polypeptide is Elongation factor Ts (Acidithiobacillus ferrooxidans (strain ATCC 23270 / DSM 14882 / CIP 104768 / NCIMB 8455) (Ferrobacillus ferrooxidans (strain ATCC 23270))).